The following is a 305-amino-acid chain: tRNA pseudouridine synthase B (305 aa).

Asp50 serves as the catalytic Nucleophile.

It belongs to the pseudouridine synthase TruB family. Type 1 subfamily.

The catalysed reaction is uridine(55) in tRNA = pseudouridine(55) in tRNA. Its function is as follows. Responsible for synthesis of pseudouridine from uracil-55 in the psi GC loop of transfer RNAs. The protein is tRNA pseudouridine synthase B of Rhodococcus jostii (strain RHA1).